Consider the following 1260-residue polypeptide: Phosphatidylinositol 3,4,5-trisphosphate 5-phosphatase 2 (1260 aa).

Residues Trp25–Val121 enclose the SH2 domain. Basic and acidic residues predominate over residues Glu126–Ser136. A disordered region spans residues Glu126–Asn178. At Ser136 the chain carries Phosphoserine. Pro residues predominate over residues Pro159–Pro171. A phosphoserine mark is found at Ser243 and Ser355. Residue Tyr888 is modified to Phosphotyrosine. Residue Ser892 is modified to Phosphoserine. The tract at residues Gly899–Asp1120 is disordered. A compositionally biased stretch (pro residues) spans Pro940 to Ala952. Residues Pro946–Arg951 carry the SH3-binding motif. The segment covering Ala953 to Gly967 has biased composition (basic and acidic residues). At Thr960 the chain carries Phosphothreonine. Residues Asn985–Tyr988 carry the NPXY motif motif. Tyr988 carries the post-translational modification Phosphotyrosine. Pro residues-rich tracts occupy residues Leu998 to Pro1013, Leu1050 to Pro1061, and Leu1090 to Pro1108. Ser1133 carries the post-translational modification Phosphoserine. Tyr1164 carries the phosphotyrosine modification. The disordered stretch occupies residues Glu1181 to Glu1200. An SAM domain is found at Leu1198–Lys1260. Position 1259 is a phosphoserine (Ser1259).

This sequence belongs to the inositol 1,4,5-trisphosphate 5-phosphatase family. In terms of assembly, interacts with tyrosine phosphorylated form of SHC1. Interacts with EGFR. Upon stimulation by the EGF signaling pathway, it forms a complex with SHC1 and EGFR. Interacts with cytoskeletal protein SORBS3/vinexin, promoting its localization to the periphery of cells. Forms a complex with filamin (FLNA or FLNB), actin, GPIb (GP1BA or GP1BB) that regulates cortical and submembraneous actin. Interacts with c-Met/MET, when c-Met/MET is phosphorylated on 'Tyr-1356'. Interacts with p130Cas/BCAR1. Interacts with CENTD3/ARAP3 via its SAM domain. Interacts with c-Cbl/CBL and CAP/SORBS1. Interacts with activated EPHA2 receptor. Interacts with receptor FCGR2A. Interacts with receptor FCGR2B. Interacts with tyrosine kinase ABL1. Interacts with tyrosine kinase TEC. Interacts with CSF1R. Interacts (via N-terminus) with SH3YL1 (via SH3 domain). Interacts with FCRL6 (tyrosine phosphorylated form). Interacts (via SH2 domain) with tyrosine phosphorylated KLRC1 (via ITIM). Interacts with NEDD9/HEF1. Tyrosine phosphorylated by the members of the SRC family after exposure to a diverse array of extracellular stimuli such as insulin, growth factors such as EGF or PDGF, chemokines, integrin ligands and hypertonic and oxidative stress. May be phosphorylated upon IgG receptor FCGR2B-binding. Phosphorylated at Tyr-988 following cell attachment and spreading. Phosphorylated at Tyr-1164 following EGF signaling pathway stimulation. Expressed abundantly in skeletal muscle tissue.

It is found in the cytoplasm. It localises to the cytosol. Its subcellular location is the cytoskeleton. The protein localises to the membrane. The protein resides in the cell projection. It is found in the filopodium. It localises to the lamellipodium. Its subcellular location is the basal cell membrane. The protein localises to the nucleus. The protein resides in the nucleus speckle. It is found in the spindle pole. It carries out the reaction a 1,2-diacyl-sn-glycero-3-phospho-(1D-myo-inositol-3,4,5-trisphosphate) + H2O = a 1,2-diacyl-sn-glycero-3-phospho-(1D-myo-inositol-3,4-bisphosphate) + phosphate. The enzyme catalyses 1,2-dioctanoyl-sn-glycero-3-phospho-(1D-myo-inositol-3,4,5-trisphosphate) + H2O = 1,2-dioctanoyl-sn-glycero-3-phospho-(1D-myo-inositol-3,4-bisphosphate) + phosphate. It catalyses the reaction 1,2-dihexadecanoyl-sn-glycero-3-phospho-(1D-myo-inositol-3,4,5-trisphosphate) + H2O = 1,2-dihexadecanoyl-sn-glycero-3-phospho-(1D-myo-inositol-3,4-bisphosphate) + phosphate. With respect to regulation, activated upon translocation to the sites of synthesis of PtdIns(3,4,5)P3 in the membrane. Enzymatic activity is enhanced in the presence of phosphatidylserine. Its function is as follows. Phosphatidylinositol (PtdIns) phosphatase that specifically hydrolyzes the 5-phosphate of phosphatidylinositol-3,4,5-trisphosphate (PtdIns(3,4,5)P3) to produce PtdIns(3,4)P2, thereby negatively regulating the PI3K (phosphoinositide 3-kinase) pathways. Required for correct mitotic spindle orientation and therefore progression of mitosis. Plays a central role in regulation of PI3K-dependent insulin signaling, although the precise molecular mechanisms and signaling pathways remain unclear. While overexpression reduces both insulin-stimulated MAP kinase and Akt activation, its absence does not affect insulin signaling or GLUT4 trafficking. Confers resistance to dietary obesity. May act by regulating AKT2, but not AKT1, phosphorylation at the plasma membrane. Part of a signaling pathway that regulates actin cytoskeleton remodeling. Required for the maintenance and dynamic remodeling of actin structures as well as in endocytosis, having a major impact on ligand-induced EGFR internalization and degradation. Participates in regulation of cortical and submembraneous actin by hydrolyzing PtdIns(3,4,5)P3 thereby regulating membrane ruffling. Regulates cell adhesion and cell spreading. Required for HGF-mediated lamellipodium formation, cell scattering and spreading. Acts as a negative regulator of EPHA2 receptor endocytosis by inhibiting via PI3K-dependent Rac1 activation. Acts as a regulator of neuritogenesis by regulating PtdIns(3,4,5)P3 level and is required to form an initial protrusive pattern, and later, maintain proper neurite outgrowth. Acts as a negative regulator of the FC-gamma-RIIA receptor (FCGR2A). Mediates signaling from the FC-gamma-RIIB receptor (FCGR2B), playing a central role in terminating signal transduction from activating immune/hematopoietic cell receptor systems. Involved in EGF signaling pathway. Upon stimulation by EGF, it is recruited by EGFR and dephosphorylates PtdIns(3,4,5)P3. Plays a negative role in regulating the PI3K-PKB pathway, possibly by inhibiting PKB activity. Down-regulates Fc-gamma-R-mediated phagocytosis in macrophages independently of INPP5D/SHIP1. In macrophages, down-regulates NF-kappa-B-dependent gene transcription by regulating macrophage colony-stimulating factor (M-CSF)-induced signaling. Plays a role in the localization of AURKA and NEDD9/HEF1 to the basolateral membrane at interphase in polarized cysts, thereby mediates cell cycle homeostasis, cell polarization and cilia assembly. Additionally promotion of cilia growth is also facilitated by hydrolysis of (PtdIns(3,4,5)P3) to PtdIns(3,4)P2. Promotes formation of apical membrane-initiation sites during the initial stages of lumen formation via Rho family-induced actin filament organization and CTNNB1 localization to cell-cell contacts. May also hydrolyze PtdIns(1,3,4,5)P4, and could thus affect the levels of the higher inositol polyphosphates like InsP6. Involved in endochondral ossification. In Sus scrofa (Pig), this protein is Phosphatidylinositol 3,4,5-trisphosphate 5-phosphatase 2.